Here is a 563-residue protein sequence, read N- to C-terminus: Alpha-keto-acid decarboxylase (563 aa).

E59 provides a ligand contact to thiamine diphosphate. The segment at 348 to 367 (SPPVASPPAEPLPPPPPREQ) is disordered. Residues 351-366 (VASPPAEPLPPPPPRE) are compositionally biased toward pro residues. The segment at 394–476 (TSFYGMADHR…VVVNNDGYTV (83 aa)) is thiamine pyrophosphate binding. Mg(2+) is bound by residues D444, N471, and G473.

The protein belongs to the TPP enzyme family. Requires a metal cation as cofactor. The cofactor is thiamine diphosphate.

Decarboxylates branched-chain and aromatic alpha-keto acids to aldehydes. This Mycobacterium avium (strain 104) protein is Alpha-keto-acid decarboxylase (kdc).